The sequence spans 187 residues: Ribosome-recycling factor (187 aa).

This sequence belongs to the RRF family.

It is found in the cytoplasm. Responsible for the release of ribosomes from messenger RNA at the termination of protein biosynthesis. May increase the efficiency of translation by recycling ribosomes from one round of translation to another. This chain is Ribosome-recycling factor, found in Methylobacterium sp. (strain 4-46).